Reading from the N-terminus, the 660-residue chain is GTP-binding protein BRASSINAZOLE INSENSITIVE PALE GREEN 2, chloroplastic (660 aa).

A chloroplast-targeting transit peptide spans 1-53 (MVVLISSTVTICNVKPKLEDGNFRVSRLIHRPEVPFFSGLSNEKKKKCAVSVM). Disordered regions lie at residues 127–158 (EGDEHVENDELAGFEMVDDDADEEEEGEDDEM) and 191–212 (NDVELDGFAPAGVGYGNVTEEK). Residues 130–158 (EHVENDELAGFEMVDDDADEEEEGEDDEM) are compositionally biased toward acidic residues. One can recognise a CP-type G domain in the interval 273 to 457 (STRLIKPMSN…MYDTPGLLHP (185 aa)).

This sequence belongs to the TRAFAC class YlqF/YawG GTPase family. In terms of assembly, binds to chloroplast 16S and 23S ribosomal RNAs. Mostly expressed in stems, petioles, leaves and flowers and, at low levels, also in roots.

The protein resides in the plastid. It localises to the chloroplast stroma. Required for brassinosteroid- (BR) mediated post-transcriptional and translational regulation in the chloroplast, including accumulation of chloroplast rRNA. Involved in chloroplast differentiation. This is GTP-binding protein BRASSINAZOLE INSENSITIVE PALE GREEN 2, chloroplastic from Arabidopsis thaliana (Mouse-ear cress).